Reading from the N-terminus, the 610-residue chain is Glutamine--fructose-6-phosphate aminotransferase [isomerizing] (610 aa).

Cys-2 (nucleophile; for GATase activity) is an active-site residue. The Glutamine amidotransferase type-2 domain maps to 2–218 (CGIVGAVAQR…EGDVAEITRR (217 aa)). 2 SIS domains span residues 286 to 426 (AVEI…QQNR) and 459 to 600 (LAPD…VDQP). Lys-605 functions as the For Fru-6P isomerization activity in the catalytic mechanism.

Homodimer.

Its subcellular location is the cytoplasm. The enzyme catalyses D-fructose 6-phosphate + L-glutamine = D-glucosamine 6-phosphate + L-glutamate. In terms of biological role, catalyzes the first step in hexosamine metabolism, converting fructose-6P into glucosamine-6P using glutamine as a nitrogen source. This Aliivibrio fischeri (strain ATCC 700601 / ES114) (Vibrio fischeri) protein is Glutamine--fructose-6-phosphate aminotransferase [isomerizing].